Consider the following 300-residue polypeptide: Bifunctional protein FolD 2 (300 aa).

Residues 165–167, Ser190, and Ile231 contribute to the NADP(+) site; that span reads GRS.

The protein belongs to the tetrahydrofolate dehydrogenase/cyclohydrolase family. Homodimer.

The enzyme catalyses (6R)-5,10-methylene-5,6,7,8-tetrahydrofolate + NADP(+) = (6R)-5,10-methenyltetrahydrofolate + NADPH. It catalyses the reaction (6R)-5,10-methenyltetrahydrofolate + H2O = (6R)-10-formyltetrahydrofolate + H(+). Its pathway is one-carbon metabolism; tetrahydrofolate interconversion. Its function is as follows. Catalyzes the oxidation of 5,10-methylenetetrahydrofolate to 5,10-methenyltetrahydrofolate and then the hydrolysis of 5,10-methenyltetrahydrofolate to 10-formyltetrahydrofolate. In Pseudomonas syringae pv. tomato (strain ATCC BAA-871 / DC3000), this protein is Bifunctional protein FolD 2.